We begin with the raw amino-acid sequence, 83 residues long: Large ribosomal subunit protein eL14 (83 aa).

Belongs to the eukaryotic ribosomal protein eL14 family. In terms of assembly, part of the 50S ribosomal subunit.

This is Large ribosomal subunit protein eL14 from Thermococcus kodakarensis (strain ATCC BAA-918 / JCM 12380 / KOD1) (Pyrococcus kodakaraensis (strain KOD1)).